The primary structure comprises 281 residues: Clc-like protein 5 (281 aa).

4 helical membrane passes run 13 to 33 (LATL…TITP), 104 to 124 (VLIL…AVIF), 137 to 157 (IMLD…LIVF), and 184 to 204 (YYLA…AALV).

It belongs to the Clc family.

Its subcellular location is the membrane. The polypeptide is Clc-like protein 5 (clc-5) (Caenorhabditis elegans).